We begin with the raw amino-acid sequence, 1378 residues long: DNA-directed RNA polymerase subunit beta (1378 aa).

This sequence belongs to the RNA polymerase beta chain family. As to quaternary structure, the RNAP catalytic core consists of 2 alpha, 1 beta, 1 beta' and 1 omega subunit. When a sigma factor is associated with the core the holoenzyme is formed, which can initiate transcription.

The enzyme catalyses RNA(n) + a ribonucleoside 5'-triphosphate = RNA(n+1) + diphosphate. In terms of biological role, DNA-dependent RNA polymerase catalyzes the transcription of DNA into RNA using the four ribonucleoside triphosphates as substrates. The protein is DNA-directed RNA polymerase subunit beta of Roseobacter denitrificans (strain ATCC 33942 / OCh 114) (Erythrobacter sp. (strain OCh 114)).